Consider the following 367-residue polypeptide: MSKPHLIIAAGGTGGHMFPAQALSEAMLRKGWRVTLSTDARGARYVGGFSHAVEIREVSSATFTRGGALAKLAVPFRIFGGVLTATARMLREKPDVVVGFGGYPTIPAMAAARLTGRPRMLHEQNGVLGRVNRVFAKHVAHVACGTWPTDVPLGADAIHTGNPVRAAIVERGGAPYTPPGDWPMSLLVFGGSQGARILSDVVPAAIALLPEAIRDLLRIAQQAREEDVDRVQAAYDDLSMRVEVDTFLHDMPRRLSEAQLVICRSGASSVADINVVGRPAIYVPLAIAVRDEQTANARGPVDAGAAVLMPESQLTPETLAQTIEQILTQPDAATQMSIAALSVAVPDATERLVALVETLAAPTPQET.

Residues 13-15, Asn125, Arg165, Ser192, and Gln293 contribute to the UDP-N-acetyl-alpha-D-glucosamine site; that span reads TGG.

Belongs to the glycosyltransferase 28 family. MurG subfamily.

It is found in the cell inner membrane. The enzyme catalyses di-trans,octa-cis-undecaprenyl diphospho-N-acetyl-alpha-D-muramoyl-L-alanyl-D-glutamyl-meso-2,6-diaminopimeloyl-D-alanyl-D-alanine + UDP-N-acetyl-alpha-D-glucosamine = di-trans,octa-cis-undecaprenyl diphospho-[N-acetyl-alpha-D-glucosaminyl-(1-&gt;4)]-N-acetyl-alpha-D-muramoyl-L-alanyl-D-glutamyl-meso-2,6-diaminopimeloyl-D-alanyl-D-alanine + UDP + H(+). Its pathway is cell wall biogenesis; peptidoglycan biosynthesis. Its function is as follows. Cell wall formation. Catalyzes the transfer of a GlcNAc subunit on undecaprenyl-pyrophosphoryl-MurNAc-pentapeptide (lipid intermediate I) to form undecaprenyl-pyrophosphoryl-MurNAc-(pentapeptide)GlcNAc (lipid intermediate II). This chain is UDP-N-acetylglucosamine--N-acetylmuramyl-(pentapeptide) pyrophosphoryl-undecaprenol N-acetylglucosamine transferase, found in Jannaschia sp. (strain CCS1).